The chain runs to 441 residues: Divalent metal cation transporter MntH (441 aa).

11 helical membrane passes run 41–61 (TGIAALLPFVGPAVIASIGYM), 74–94 (AAYGYRLLWVVLAANAIAMLF), 116–136 (HFPAPIVWGMWIASEIAAMAT), 141–161 (FLGGALAFALLCHLPLFAGMI), 183–203 (AAIAALVGVIGACYLGELMIA), 223–243 (AALTIAVGIIGATIMPHTLYL), 271–291 (VVVALGLAGFVNLAMVMMAAS), 311–331 (IPVLGPAAGVLFLVALLTSGV), 360–380 (AVTIAPAFAVVACGCDVTRAM), 381–401 (VASQVVLSFVLPMPMIALLIL), and 419–439 (IVAGTATVVIVGLNAYLVWAA).

This sequence belongs to the NRAMP family.

The protein localises to the cell inner membrane. In terms of biological role, h(+)-stimulated, divalent metal cation uptake system. The protein is Divalent metal cation transporter MntH of Burkholderia ambifaria (strain ATCC BAA-244 / DSM 16087 / CCUG 44356 / LMG 19182 / AMMD) (Burkholderia cepacia (strain AMMD)).